Consider the following 264-residue polypeptide: Thymidylate synthase (264 aa).

R21 is a binding site for dUMP. Residue H51 coordinates (6R)-5,10-methylene-5,6,7,8-tetrahydrofolate. A dUMP-binding site is contributed by R126–R127. Residue C146 is the Nucleophile of the active site. Residues R166–D169, N177, and H207–Y209 each bind dUMP. A (6R)-5,10-methylene-5,6,7,8-tetrahydrofolate-binding site is contributed by D169. A263 lines the (6R)-5,10-methylene-5,6,7,8-tetrahydrofolate pocket.

Belongs to the thymidylate synthase family. Bacterial-type ThyA subfamily. As to quaternary structure, homodimer.

It localises to the cytoplasm. The enzyme catalyses dUMP + (6R)-5,10-methylene-5,6,7,8-tetrahydrofolate = 7,8-dihydrofolate + dTMP. It participates in pyrimidine metabolism; dTTP biosynthesis. Catalyzes the reductive methylation of 2'-deoxyuridine-5'-monophosphate (dUMP) to 2'-deoxythymidine-5'-monophosphate (dTMP) while utilizing 5,10-methylenetetrahydrofolate (mTHF) as the methyl donor and reductant in the reaction, yielding dihydrofolate (DHF) as a by-product. This enzymatic reaction provides an intracellular de novo source of dTMP, an essential precursor for DNA biosynthesis. This chain is Thymidylate synthase, found in Shigella dysenteriae serotype 1 (strain Sd197).